The primary structure comprises 265 residues: Tryptophan synthase alpha chain (265 aa).

Residues Glu-49 and Glu-60 each act as proton acceptor in the active site.

This sequence belongs to the TrpA family. Tetramer of two alpha and two beta chains.

It catalyses the reaction (1S,2R)-1-C-(indol-3-yl)glycerol 3-phosphate + L-serine = D-glyceraldehyde 3-phosphate + L-tryptophan + H2O. Its pathway is amino-acid biosynthesis; L-tryptophan biosynthesis; L-tryptophan from chorismate: step 5/5. Functionally, the alpha subunit is responsible for the aldol cleavage of indoleglycerol phosphate to indole and glyceraldehyde 3-phosphate. In Janthinobacterium sp. (strain Marseille) (Minibacterium massiliensis), this protein is Tryptophan synthase alpha chain.